Reading from the N-terminus, the 490-residue chain is ATP synthase subunit beta, plastid (490 aa).

Residue 170–177 (GGAGVGKT) coordinates ATP.

It belongs to the ATPase alpha/beta chains family. In terms of assembly, F-type ATPases have 2 components, CF(1) - the catalytic core - and CF(0) - the membrane proton channel. CF(1) has five subunits: alpha(3), beta(3), gamma(1), delta(1), epsilon(1). CF(0) has four main subunits: a(1), b(1), b'(1) and c(9-12).

Its subcellular location is the plastid thylakoid membrane. The catalysed reaction is ATP + H2O + 4 H(+)(in) = ADP + phosphate + 5 H(+)(out). Its function is as follows. Produces ATP from ADP in the presence of a proton gradient across the membrane. The catalytic sites are hosted primarily by the beta subunits. The chain is ATP synthase subunit beta, plastid from Cuscuta reflexa (Southern Asian dodder).